We begin with the raw amino-acid sequence, 418 residues long: Putative ion-transport protein YfeO (418 aa).

12 helical membrane passes run Leu-10–Val-30, Asp-54–Ile-74, Ala-99–Pro-119, Glu-120–Pro-140, Ile-149–Ile-169, Leu-186–Pro-206, Ile-223–Cys-243, Val-258–Val-278, Asp-300–Phe-320, Gly-322–His-342, Val-343–Val-363, and Leu-371–Met-391.

This sequence belongs to the chloride channel (TC 2.A.49) family.

It localises to the cell membrane. The protein is Putative ion-transport protein YfeO of Escherichia coli (strain 55989 / EAEC).